A 239-amino-acid polypeptide reads, in one-letter code: Norbelladine 4'-O-methyltransferase 5 (239 aa).

S-adenosyl-L-methionine-binding positions include V55, E77, 79–80, S85, D103, and A132; that span reads GV. D155 is a binding site for a divalent metal cation. S-adenosyl-L-methionine is bound at residue D157. A divalent metal cation-binding residues include D181 and N182.

The protein belongs to the class I-like SAM-binding methyltransferase superfamily. Cation-dependent O-methyltransferase family. Requires Mg(2+) as cofactor.

The enzyme catalyses norbelladine + S-adenosyl-L-methionine = 4'-O-methylnorbelladine + S-adenosyl-L-homocysteine + H(+). The protein operates within alkaloid biosynthesis. Functionally, 4'-O-methyltransferase converting norbelladine to 4'-O-methylnorbelladine. 4'-O-methylnorbelladine is a precursor to all Amaryllidaceae alkaloids such as galanthamine, lycorine and haemanthamine, and including haemanthamine- and crinamine-type alkaloids, promising anticancer agents. This is Norbelladine 4'-O-methyltransferase 5 from Narcissus aff. pseudonarcissus MK-2014 (Daffodil).